The primary structure comprises 432 residues: Homogentisate 1,2-dioxygenase (432 aa).

His-333, Glu-339, and His-369 together coordinate Fe cation.

This sequence belongs to the homogentisate dioxygenase family. Requires Fe cation as cofactor.

It carries out the reaction homogentisate + O2 = 4-maleylacetoacetate + H(+). It participates in amino-acid degradation; L-phenylalanine degradation; acetoacetate and fumarate from L-phenylalanine: step 4/6. This Dictyostelium discoideum (Social amoeba) protein is Homogentisate 1,2-dioxygenase (hgd).